A 56-amino-acid polypeptide reads, in one-letter code: U4-myrmicitoxin-Tb1a (56 aa).

Positions Met-1–Ala-26 are cleaved as a signal peptide. Residues Lys-27–Ala-40 constitute a propeptide that is removed on maturation. Residue Gly-53 is modified to Glycine amide.

Post-translationally, contains 1 disulfide bond. Expressed by the venom gland.

It is found in the secreted. In terms of biological role, venom protein with unknown function. Does not induce paralysis when a high dose is administered by intrathoracic injection into the blowfly Lucilia caesar. The sequence is that of U4-myrmicitoxin-Tb1a from Tetramorium bicarinatum (Tramp ant).